A 924-amino-acid chain; its full sequence is Inositol polyphosphate 4-phosphatase type II (924 aa).

Basic and acidic residues predominate over residues 1-13 (MEIKEEGASEEGQ). Disordered regions lie at residues 1-24 (MEIKEEGASEEGQHFLPTAQANDP), 481-516 (ILKKPPSPKSSTEESSPQDQPPVMRGQDSIPHHSDY), and 546-570 (DGGSEGSGGNNDGEKEPSLTDAIPS). Residues 23-165 (DPGDCQFTSI…LKSKEQLLVL (143 aa)) form the C2 domain.

It belongs to the inositol 3,4-bisphosphate 4-phosphatase family. As to expression, widely expressed with highest levels occurring in the skeletal muscle and heart.

It carries out the reaction a 1,2-diacyl-sn-glycero-3-phospho-(1D-myo-inositol-3,4-bisphosphate) + H2O = a 1,2-diacyl-sn-glycero-3-phospho-(1D-myo-inositol-3-phosphate) + phosphate. It catalyses the reaction 1D-myo-inositol 1,3,4-trisphosphate + H2O = 1D-myo-inositol 1,3-bisphosphate + phosphate. The enzyme catalyses 1D-myo-inositol 3,4-bisphosphate + H2O = 1D-myo-inositol 3-phosphate + phosphate. Its pathway is signal transduction; phosphatidylinositol signaling pathway. Its activity is regulated as follows. Strongly inhibited by inositol hexakisphosphate. Functionally, catalyzes the hydrolysis of the 4-position phosphate of phosphatidylinositol 3,4-bisphosphate, inositol 1,3,4-trisphosphate and inositol 3,4-trisphosphate. Plays a role in the late stages of macropinocytosis by dephosphorylating phosphatidylinositol 3,4-bisphosphate in membrane ruffles. The lipid phosphatase activity is critical for tumor suppressor function. Antagonizes the PI3K-AKT/PKB signaling pathway by dephosphorylating phosphoinositides and thereby modulating cell cycle progression and cell survival. This chain is Inositol polyphosphate 4-phosphatase type II (INPP4B), found in Homo sapiens (Human).